The sequence spans 96 residues: Acylphosphatase (96 aa).

One can recognise an Acylphosphatase-like domain in the interval 11-96 (ARRWYVRGRV…ITSYDSFRIR (86 aa)). Active-site residues include arginine 26 and asparagine 44.

It belongs to the acylphosphatase family.

It carries out the reaction an acyl phosphate + H2O = a carboxylate + phosphate + H(+). In Solibacter usitatus (strain Ellin6076), this protein is Acylphosphatase (acyP).